Here is a 269-residue protein sequence, read N- to C-terminus: Phosphate import ATP-binding protein PstB (269 aa).

The region spanning 21–264 (SEVRNLSFYY…PKNKQTEDYI (244 aa)) is the ABC transporter domain. 53-60 (GPSGCGKS) provides a ligand contact to ATP.

This sequence belongs to the ABC transporter superfamily. Phosphate importer (TC 3.A.1.7) family. In terms of assembly, the complex is composed of two ATP-binding proteins (PstB), two transmembrane proteins (PstC and PstA) and a solute-binding protein (PstS).

It localises to the cell inner membrane. It catalyses the reaction phosphate(out) + ATP + H2O = ADP + 2 phosphate(in) + H(+). Part of the ABC transporter complex PstSACB involved in phosphate import. Responsible for energy coupling to the transport system. In Nitrosospira multiformis (strain ATCC 25196 / NCIMB 11849 / C 71), this protein is Phosphate import ATP-binding protein PstB.